The sequence spans 92 residues: MEEVAREEVEIDKDLRRKIKKTVKKILESSNLYKITEIKAREEASLKLDLDLSQDPYKVIVKEEVENFLEEAVKLIGNKLAMLPKRIESTSI.

One can recognise a DEK-C domain in the interval 13-70 (KDLRRKIKKTVKKILESSNLYKITEIKAREEASLKLDLDLSQDPYKVIVKEEVENFLE).

In terms of assembly, associated with the Mediator complex.

The protein resides in the nucleus. The polypeptide is Mediator-associated protein 3 (Arabidopsis thaliana (Mouse-ear cress)).